Consider the following 300-residue polypeptide: Ribokinase (300 aa).

Substrate-binding positions include 11–13, 39–43, and E139; these read SMD and GKGAN. Residues N183 and 210–215 each bind ATP; that span reads TLGSEG. Positions 236 and 238 each coordinate K(+). 241–242 is a binding site for ATP; it reads GD. D242 contacts substrate. D242 (proton acceptor) is an active-site residue. Positions 272, 275, and 277 each coordinate K(+).

The protein belongs to the carbohydrate kinase PfkB family. Ribokinase subfamily. Homodimer. Requires Mg(2+) as cofactor.

It is found in the cytoplasm. The catalysed reaction is D-ribose + ATP = D-ribose 5-phosphate + ADP + H(+). It participates in carbohydrate metabolism; D-ribose degradation; D-ribose 5-phosphate from beta-D-ribopyranose: step 2/2. With respect to regulation, activated by a monovalent cation that binds near, but not in, the active site. The most likely occupant of the site in vivo is potassium. Ion binding induces a conformational change that may alter substrate affinity. In terms of biological role, catalyzes the phosphorylation of ribose at O-5 in a reaction requiring ATP and magnesium. The resulting D-ribose-5-phosphate can then be used either for sythesis of nucleotides, histidine, and tryptophan, or as a component of the pentose phosphate pathway. The sequence is that of Ribokinase from Lactococcus lactis subsp. lactis (strain IL1403) (Streptococcus lactis).